A 263-amino-acid polypeptide reads, in one-letter code: MALGEDDILSVPFKYFVFCIGGLPSSALLICVLLSLFLHFDQATSTHCEVANWLPSISAAVSTYTPEKYIWRILIGLHIGPRLVVAVAFRNFLMSSPLRPYTGSKQFKFLCNIACGLNLLENFFLLALTSISSSEDHSLHAKCFGGFAISSIIYMILSTWLFSESGRRRATNLGERSYEYKILGASIFVVCFFLGGYLYWRHNTYCEPGIYTLFALVEYSAVLSNIFFHCTLYYDFHGKNIALTSSFGSSHYNLLPTQIEKDT.

6 helical membrane-spanning segments follow: residues 16 to 36 (FVFC…LLSL), 69 to 89 (YIWR…AVAF), 109 to 129 (FLCN…LALT), 143 to 163 (CFGG…WLFS), 180 to 200 (YKIL…YLYW), and 208 to 228 (PGIY…NIFF).

Belongs to the PGAP2 family.

The protein resides in the golgi apparatus membrane. Its subcellular location is the endoplasmic reticulum membrane. Its function is as follows. Involved in the lipid remodeling steps of GPI-anchor maturation. Required for stable expression of GPI-anchored proteins at the cell surface. This is Post-GPI attachment to proteins factor 2 from Caenorhabditis briggsae.